The sequence spans 501 residues: Ribose import ATP-binding protein RbsA (501 aa).

2 consecutive ABC transporter domains span residues 6–242 (LQLS…VGRK) and 253–495 (KHGE…VGKK). 38–45 (GENGAGKS) is an ATP binding site.

Belongs to the ABC transporter superfamily. Ribose importer (TC 3.A.1.2.1) family. As to quaternary structure, the complex is composed of an ATP-binding protein (RbsA), two transmembrane proteins (RbsC) and a solute-binding protein (RbsB).

The protein localises to the cell inner membrane. The enzyme catalyses D-ribose(out) + ATP + H2O = D-ribose(in) + ADP + phosphate + H(+). Part of the ABC transporter complex RbsABC involved in ribose import. Responsible for energy coupling to the transport system. The chain is Ribose import ATP-binding protein RbsA from Vibrio parahaemolyticus serotype O3:K6 (strain RIMD 2210633).